A 321-amino-acid chain; its full sequence is Lipoyl synthase (321 aa).

7 residues coordinate [4Fe-4S] cluster: cysteine 68, cysteine 73, cysteine 79, cysteine 94, cysteine 98, cysteine 101, and serine 308. One can recognise a Radical SAM core domain in the interval 80 to 297 (FNHGTATFMI…KAEALAMGFT (218 aa)).

Belongs to the radical SAM superfamily. Lipoyl synthase family. It depends on [4Fe-4S] cluster as a cofactor.

It localises to the cytoplasm. It catalyses the reaction [[Fe-S] cluster scaffold protein carrying a second [4Fe-4S](2+) cluster] + N(6)-octanoyl-L-lysyl-[protein] + 2 oxidized [2Fe-2S]-[ferredoxin] + 2 S-adenosyl-L-methionine + 4 H(+) = [[Fe-S] cluster scaffold protein] + N(6)-[(R)-dihydrolipoyl]-L-lysyl-[protein] + 4 Fe(3+) + 2 hydrogen sulfide + 2 5'-deoxyadenosine + 2 L-methionine + 2 reduced [2Fe-2S]-[ferredoxin]. It functions in the pathway protein modification; protein lipoylation via endogenous pathway; protein N(6)-(lipoyl)lysine from octanoyl-[acyl-carrier-protein]: step 2/2. Its function is as follows. Catalyzes the radical-mediated insertion of two sulfur atoms into the C-6 and C-8 positions of the octanoyl moiety bound to the lipoyl domains of lipoate-dependent enzymes, thereby converting the octanoylated domains into lipoylated derivatives. The protein is Lipoyl synthase of Salmonella arizonae (strain ATCC BAA-731 / CDC346-86 / RSK2980).